Here is a 107-residue protein sequence, read N- to C-terminus: Translation initiation factor IF-1, chloroplastic (107 aa).

One can recognise an S1-like domain in the interval 8-83; it reads REKKNPREAK…SKGRIIYRLP (76 aa).

It belongs to the IF-1 family. As to quaternary structure, component of the 30S ribosomal translation pre-initiation complex which assembles on the 30S ribosome in the order IF-2 and IF-3, IF-1 and N-formylmethionyl-tRNA(fMet); mRNA recruitment can occur at any time during PIC assembly.

The protein localises to the plastid. It localises to the chloroplast. Its function is as follows. One of the essential components for the initiation of protein synthesis. Stabilizes the binding of IF-2 and IF-3 on the 30S subunit to which N-formylmethionyl-tRNA(fMet) subsequently binds. Helps modulate mRNA selection, yielding the 30S pre-initiation complex (PIC). Upon addition of the 50S ribosomal subunit IF-1, IF-2 and IF-3 are released leaving the mature 70S translation initiation complex. The polypeptide is Translation initiation factor IF-1, chloroplastic (Lolium perenne (Perennial ryegrass)).